Here is a 157-residue protein sequence, read N- to C-terminus: MFCPFCRHPDSRVIDSRTSDDGLSIRRRRQCPECGRRFSTTETASLSVIKRSGVVEPFSREKIVLGVRKACQGRPVTDSDLAVLAQKVEETIRSTGASQIEANDIGLAILPELRELDEVAYLRFASVYQAFDSLEDFESAIQQLRVEHRGEPADVQV.

Residues Cys3–Cys34 fold into a zinc finger. The ATP-cone domain occupies Leu46 to Asp136.

This sequence belongs to the NrdR family. The cofactor is Zn(2+).

In terms of biological role, negatively regulates transcription of bacterial ribonucleotide reductase nrd genes and operons by binding to NrdR-boxes. This Leifsonia xyli subsp. xyli (strain CTCB07) protein is Transcriptional repressor NrdR.